We begin with the raw amino-acid sequence, 254 residues long: Flavin-dependent thymidylate synthase (254 aa).

The region spanning leucine 7–tyrosine 237 is the ThyX domain. Residues serine 71, arginine 95–arginine 97, and glutamine 103 contribute to the FAD site. Residues glutamate 92–arginine 95, glutamine 103–arginine 107, and arginine 176 each bind dUMP. Residues arginine 95–serine 105 carry the ThyX motif motif. FAD is bound by residues asparagine 192 to arginine 194 and histidine 198. Position 203 (arginine 203) interacts with dUMP. The active-site Involved in ionization of N3 of dUMP, leading to its activation is arginine 203.

This sequence belongs to the thymidylate synthase ThyX family. In terms of assembly, homotetramer. The cofactor is FAD.

The catalysed reaction is dUMP + (6R)-5,10-methylene-5,6,7,8-tetrahydrofolate + NADPH + H(+) = dTMP + (6S)-5,6,7,8-tetrahydrofolate + NADP(+). It participates in pyrimidine metabolism; dTTP biosynthesis. Its function is as follows. Catalyzes the reductive methylation of 2'-deoxyuridine-5'-monophosphate (dUMP) to 2'-deoxythymidine-5'-monophosphate (dTMP) while utilizing 5,10-methylenetetrahydrofolate (mTHF) as the methyl donor, and NADPH and FADH(2) as the reductant. This Mycobacterium sp. (strain KMS) protein is Flavin-dependent thymidylate synthase.